Consider the following 198-residue polypeptide: MEKPATRKKKSQAPKEEAGAQKATVKGEKTSKGKKATKKPRKPRRPRKEPVLSPEDEAHIFDAFDASFKDDFEGVPVFVPFQRKKPYECGECGRIFKHKTDHIRHQRVHTGEKPFKCDQCGKTFRHSSDVTKHQRIHTGEKPFKCGECGKAFNCGSNLLKHQKTHTGEKPYGCEECGKSFAYSSCLIRHRKRHPRKKH.

A compositionally biased stretch (basic residues) spans 1–12 (MEKPATRKKKSQ). The interval 1–56 (MEKPATRKKKSQAPKEEAGAQKATVKGEKTSKGKKATKKPRKPRRPRKEPVLSPED) is disordered. Positions 13–31 (APKEEAGAQKATVKGEKTS) are enriched in basic and acidic residues. A compositionally biased stretch (basic residues) spans 32–47 (KGKKATKKPRKPRRPR). C2H2-type zinc fingers lie at residues 87–109 (YECGECGRIFKHKTDHIRHQRVH), 115–137 (FKCDQCGKTFRHSSDVTKHQRIH), 143–165 (FKCGECGKAFNCGSNLLKHQKTH), and 171–193 (YGCEECGKSFAYSSCLIRHRKRH).

Belongs to the krueppel C2H2-type zinc-finger protein family. As to expression, predominantly in the spermatocytes and spermatids of testes. It is also expressed in the fetus and embryonic stem cells at lower levels.

Its subcellular location is the nucleus. Its function is as follows. A putative DNA-binding regulatory protein associated with meiosis in spermatogenesis. The chain is Zinc finger protein 41 (Zfp41) from Mus musculus (Mouse).